The primary structure comprises 663 residues: MDVGESNERVKDDSALQASPRSPLSSIDLAIDGAMNASIEQLYHNVCEMESSDDQSPSRASFISYGAESRIDLELRHLVGDVGEEGESKKEIILEKKEESNGEGSLSQKKPLSNGKKVAKTSPNNPKMPGSRISSRKSPDLGKVSVDEESPELGVVLLKQARELVSSGENLNKALDLALRAVKVFEKCGEGEKQLGLNLVMSLHILAAIYAGLGRYNDAVPVLERSIEIPMIEDGEDHALAKFAGCMQLGDMYGLMGQVENSIMLYTAGLEIQRQVLGESDARVGETCRYLAEAHVQAMQFEEASRLCQMALDIHKENGAAATASIEEAADRKLMGLICDAKGDYEVALEHYVLASMAMSSQNHREDVAAVDCSIGDAYMSLARFDEAIFAYQKALAVFKQGKGETHSSVALVYVRLADLYNKIGKTRDSKSYCENALKIYLKPTPGTPMEEVATGFIEISAIYQSMNELDQALKLLRRALKIYANAPGQQNTIAGIEAQMGVVTYMMGNYSESYDIFKSAISKFRNSGEKKTALFGIALNQMGLACVQRYAINEAADLFEEAKTILEKECGPYHPDTLAVYSNLAGTYDAMGRLDDAIEILEYVVGTREEKLGTANPEVEDEKQRLAALLKEAGRGRSKRNRALLTLLDNNPEIANGQRPVY.

The span at 1 to 14 (MDVGESNERVKDDS) shows a compositional bias: basic and acidic residues. Disordered stretches follow at residues 1–24 (MDVG…RSPL) and 86–146 (GESK…KVSV). Ser-19 is modified (phosphoserine). Over residues 86 to 100 (GESKKEIILEKKEES) the composition is skewed to basic and acidic residues. Residues 102–111 (GEGSLSQKKP) are compositionally biased toward polar residues. TPR repeat units lie at residues 147 to 181 (DEES…ALRA), 200 to 233 (VMSL…PMIE), 243 to 276 (FAGC…QRQV), 285 to 318 (GETC…HKEN), 329 to 363 (AADR…SSQN), 369 to 402 (AAVD…FKQG), 411 to 444 (ALVY…YLKP), 454 to 487 (ATGF…YANA), 495 to 528 (AGIE…FRNS), 537 to 570 (GIAL…LEKE), and 579 to 612 (LAVY…REEK).

This sequence belongs to the kinesin light chain family.

The protein is Protein KINESIN LIGHT CHAIN-RELATED 2 of Arabidopsis thaliana (Mouse-ear cress).